The chain runs to 354 residues: Phosphate acyltransferase (354 aa).

Belongs to the PlsX family. In terms of assembly, homodimer. Probably interacts with PlsY.

The protein localises to the cytoplasm. The catalysed reaction is a fatty acyl-[ACP] + phosphate = an acyl phosphate + holo-[ACP]. It participates in lipid metabolism; phospholipid metabolism. Its function is as follows. Catalyzes the reversible formation of acyl-phosphate (acyl-PO(4)) from acyl-[acyl-carrier-protein] (acyl-ACP). This enzyme utilizes acyl-ACP as fatty acyl donor, but not acyl-CoA. In Bordetella petrii (strain ATCC BAA-461 / DSM 12804 / CCUG 43448), this protein is Phosphate acyltransferase.